The sequence spans 208 residues: Small ribosomal subunit protein uS5 (208 aa).

Over residues 1 to 21 (MSDREQRDGGRSAENNNDRKG) the composition is skewed to basic and acidic residues. Residues 1-38 (MSDREQRDGGRSAENNNDRKGRNNGRRNDRRNHQDNER) are disordered. The S5 DRBM domain occupies 41–104 (YIERVVTINR…EEARKNFFRV (64 aa)).

Belongs to the universal ribosomal protein uS5 family. Part of the 30S ribosomal subunit. Contacts proteins S4 and S8.

With S4 and S12 plays an important role in translational accuracy. Its function is as follows. Located at the back of the 30S subunit body where it stabilizes the conformation of the head with respect to the body. This is Small ribosomal subunit protein uS5 from Corynebacterium aurimucosum (strain ATCC 700975 / DSM 44827 / CIP 107346 / CN-1) (Corynebacterium nigricans).